A 248-amino-acid polypeptide reads, in one-letter code: 5'-nucleotidase SurE (248 aa).

Positions 8, 9, 39, and 91 each coordinate a divalent metal cation.

The protein belongs to the SurE nucleotidase family. It depends on a divalent metal cation as a cofactor.

Its subcellular location is the cytoplasm. The enzyme catalyses a ribonucleoside 5'-phosphate + H2O = a ribonucleoside + phosphate. Nucleotidase that shows phosphatase activity on nucleoside 5'-monophosphates. The sequence is that of 5'-nucleotidase SurE from Neisseria meningitidis serogroup C / serotype 2a (strain ATCC 700532 / DSM 15464 / FAM18).